The sequence spans 229 residues: MSTEQPAPRWAAFARDTNETKIQIALNLDGGAFPPETDARLNVSIADGHATQASKSQTISVNTGIGFLDHMLHALAKHAGWSLALACKGDLHIDDHHTAEDVCIALGYAFAKALGTPTGLARFGSAYCPLDEALSRAVVDLSNRPFAVVDLGLKREKIGDLSTEMIPHCIHSFAGAARITVHVDCLRGDNDHHRAESAFKALAVATRQATSRVAGREGEVPSTKGTLSV.

It belongs to the imidazoleglycerol-phosphate dehydratase family.

The enzyme catalyses D-erythro-1-(imidazol-4-yl)glycerol 3-phosphate = 3-(imidazol-4-yl)-2-oxopropyl phosphate + H2O. The protein operates within amino-acid biosynthesis; L-histidine biosynthesis; L-histidine from 5-phospho-alpha-D-ribose 1-diphosphate: step 6/9. The chain is Imidazoleglycerol-phosphate dehydratase from Neurospora crassa (strain ATCC 24698 / 74-OR23-1A / CBS 708.71 / DSM 1257 / FGSC 987).